The following is a 396-amino-acid chain: Acetate kinase (396 aa).

Asn8 contributes to the Mg(2+) binding site. Lys15 is a binding site for ATP. Arg89 is a binding site for substrate. Asp146 (proton donor/acceptor) is an active-site residue. ATP is bound by residues 206-210, 283-285, and 331-335; these read HIGNG, DMR, and GIGEN. Glu383 contacts Mg(2+).

This sequence belongs to the acetokinase family. In terms of assembly, homodimer. Requires Mg(2+) as cofactor. It depends on Mn(2+) as a cofactor.

The protein localises to the cytoplasm. The enzyme catalyses acetate + ATP = acetyl phosphate + ADP. It functions in the pathway metabolic intermediate biosynthesis; acetyl-CoA biosynthesis; acetyl-CoA from acetate: step 1/2. Its function is as follows. Catalyzes the formation of acetyl phosphate from acetate and ATP. Can also catalyze the reverse reaction. The sequence is that of Acetate kinase from Streptococcus gordonii (strain Challis / ATCC 35105 / BCRC 15272 / CH1 / DL1 / V288).